A 67-amino-acid polypeptide reads, in one-letter code: MKQPSLDELEKRAGSKYALAVLAAKRARMLTESQFAAQYPKGTKPVTIALMEIAAGKIKYEWGKKKA.

The protein belongs to the RNA polymerase subunit omega family. In terms of assembly, the RNAP catalytic core consists of 2 alpha, 1 beta, 1 beta' and 1 omega subunit. When a sigma factor is associated with the core the holoenzyme is formed, which can initiate transcription.

The catalysed reaction is RNA(n) + a ribonucleoside 5'-triphosphate = RNA(n+1) + diphosphate. In terms of biological role, promotes RNA polymerase assembly. Latches the N- and C-terminal regions of the beta' subunit thereby facilitating its interaction with the beta and alpha subunits. This is DNA-directed RNA polymerase subunit omega from Moorella thermoacetica (strain ATCC 39073 / JCM 9320).